A 195-amino-acid polypeptide reads, in one-letter code: Coagulogen (195 aa).

The first 20 residues, methionine 1–alanine 20, serve as a signal peptide directing secretion. Intrachain disulfides connect cysteine 28–cysteine 188, cysteine 30–cysteine 115, cysteine 80–cysteine 182, cysteine 85–cysteine 141, cysteine 95–cysteine 189, cysteine 108–cysteine 161, cysteine 147–cysteine 191, and cysteine 155–cysteine 193.

Belongs to the coagulin family. In terms of assembly, coagulogen is cleaved after Arg-38 and Arg-66 by a clotting enzyme contained in the hemocyte and activated by a bacterial endotoxin (lipopolysaccharide). This cleavage releases the peptide C and leaves 2 chains of coagulin, A and B, linked by two disulfide bonds. Coagulin molecules interlink to form a gel. In terms of tissue distribution, hemolymph.

Its subcellular location is the secreted. Functionally, coagulogen is a gel-forming protein of hemolymph; it hinders the spread of invaders by immobilizing them. This Limulus polyphemus (Atlantic horseshoe crab) protein is Coagulogen.